Consider the following 273-residue polypeptide: NH(3)-dependent NAD(+) synthetase (273 aa).

46–53 provides a ligand contact to ATP; the sequence is GISGGQDS. D52 contributes to the Mg(2+) binding site. A deamido-NAD(+)-binding site is contributed by R139. T159 lines the ATP pocket. E164 contributes to the Mg(2+) binding site. Residues K172 and D179 each coordinate deamido-NAD(+). 2 residues coordinate ATP: K188 and T210. Residue 259–260 coordinates deamido-NAD(+); that stretch reads HK.

Belongs to the NAD synthetase family. As to quaternary structure, homodimer.

It catalyses the reaction deamido-NAD(+) + NH4(+) + ATP = AMP + diphosphate + NAD(+) + H(+). It functions in the pathway cofactor biosynthesis; NAD(+) biosynthesis; NAD(+) from deamido-NAD(+) (ammonia route): step 1/1. Catalyzes the ATP-dependent amidation of deamido-NAD to form NAD. Uses ammonia as a nitrogen source. This chain is NH(3)-dependent NAD(+) synthetase, found in Streptococcus thermophilus (strain ATCC BAA-250 / LMG 18311).